The following is a 568-amino-acid chain: Urease subunit alpha (568 aa).

In terms of domain architecture, Urease spans glycine 130–phenylalanine 568. Positions 135, 137, and 218 each coordinate Ni(2+). At lysine 218 the chain carries N6-carboxylysine. Histidine 220 provides a ligand contact to substrate. 2 residues coordinate Ni(2+): histidine 247 and histidine 273. Histidine 321 (proton donor) is an active-site residue. Aspartate 361 contacts Ni(2+).

Belongs to the metallo-dependent hydrolases superfamily. Urease alpha subunit family. In terms of assembly, heterotrimer of UreA (gamma), UreB (beta) and UreC (alpha) subunits. Three heterotrimers associate to form the active enzyme. Requires Ni cation as cofactor. Post-translationally, carboxylation allows a single lysine to coordinate two nickel ions.

It localises to the cytoplasm. It carries out the reaction urea + 2 H2O + H(+) = hydrogencarbonate + 2 NH4(+). It functions in the pathway nitrogen metabolism; urea degradation; CO(2) and NH(3) from urea (urease route): step 1/1. This Burkholderia ambifaria (strain ATCC BAA-244 / DSM 16087 / CCUG 44356 / LMG 19182 / AMMD) (Burkholderia cepacia (strain AMMD)) protein is Urease subunit alpha.